Reading from the N-terminus, the 597-residue chain is MATLSMQVSILSKQVKNLNSFGMRASKLPMVARRVDVSTTRLRPICSASLQVEEETRRSGNYQASIWDNDFIQSFNTNKYRDEKHLNRKEELIAQVKVLLNTKMEAVKQLELIDDLRNLGLTYYFQDEFKKILTCIYNDHKCFKNEQVGDLYFTSLGFRLLRLHGFDVSEDVFSFFKNEDGSDFKASLGENTKDVLQLYEASFLVRVGEVTLEQARVFSTKILEKKVDEGINDEKLLAWIQHSLALPLHWRIQRLEARWFLDAYAARKDMNPLIFELGKIDFHIIQETQLEEVQEVSRWWTNSNLAEKLPFVRDRIVECYFWALGLFEPHEYGYQRKMAAIIITFVTIIDDVYDVYGTLDELQLFTDAIRKWDFESISTLPYYMQVCYLALYTYASELAYDILKDQGFNSISYLQRSWLSLVEGFFQEAKWYYAGYTPTLAEYLENAKVSISSPTIISQVYFTLPNSTERTVVENVYGYHNILYLSGMILRLADDLGTTQFELKRGDVQKAIQCYMKDNNATEKEGQEHVKYLLLEAWKEMNTAMADPDCPLSEDLVDAAANLGRASQFIYLEGDGHGVQHSEIHNQMGGLIFEPYV.

Residues 1 to 47 (MATLSMQVSILSKQVKNLNSFGMRASKLPMVARRVDVSTTRLRPICS) constitute a chloroplast transit peptide. D350 and D354 together coordinate Mn(2+). A DDXXD motif motif is present at residues 350–354 (DDVYD). 2 homodimerization regions span residues 356 to 362 (YGTLDEL) and 428 to 464 (EAKWYYAGYTPTLAEYLENAKVSISSPTIISQVYFTL). Residues D494 and E502 each contribute to the Mn(2+) site.

The protein belongs to the terpene synthase family. Homodimer. Mn(2+) serves as cofactor. Requires Mg(2+) as cofactor.

The protein localises to the plastid. It is found in the chloroplast. It carries out the reaction (2E)-geranyl diphosphate = gamma-terpinene + diphosphate. It participates in secondary metabolite biosynthesis; terpenoid biosynthesis. Functionally, involved in the biosynthesis of phenolic monoterpenes natural products thymol and carvacrol which have a broad range of biological activities acting as antimicrobial compounds, insecticides, antioxidants and pharmaceutical agents. Monoterpene synthase which catalyzes the conversion of geranyl diphosphate (GPP) to gamma-terpinene. The sequence is that of Gamma-terpinene synthase, chloroplastic from Thymus caespititius (Cretan thyme).